Reading from the N-terminus, the 140-residue chain is Nucleoside diphosphate kinase (140 aa).

ATP is bound by residues Lys11, Phe59, Arg87, Thr93, Arg104, and Asn114. His117 (pros-phosphohistidine intermediate) is an active-site residue.

It belongs to the NDK family. As to quaternary structure, homotetramer. Mg(2+) serves as cofactor.

It localises to the cytoplasm. It catalyses the reaction a 2'-deoxyribonucleoside 5'-diphosphate + ATP = a 2'-deoxyribonucleoside 5'-triphosphate + ADP. The enzyme catalyses a ribonucleoside 5'-diphosphate + ATP = a ribonucleoside 5'-triphosphate + ADP. In terms of biological role, major role in the synthesis of nucleoside triphosphates other than ATP. The ATP gamma phosphate is transferred to the NDP beta phosphate via a ping-pong mechanism, using a phosphorylated active-site intermediate. This is Nucleoside diphosphate kinase from Rhodospirillum rubrum (strain ATCC 11170 / ATH 1.1.1 / DSM 467 / LMG 4362 / NCIMB 8255 / S1).